A 224-amino-acid polypeptide reads, in one-letter code: MVQCLVVDDDPRILNYIASHLQIEHIDAYTQPSGEAALKLLEKQRVDIAVVDIMMDGMDGFQLCNTLKNDYDIPVIMLTARDALSDKERAFISGTDDYVTKPFEVKELIFRIRAVLRRYNINSNSEMTIGNLTLNQSYLELQVSNKTMTLPNKEFQLLFMLAARPKQIFTREQIIEKIWGYDYEGDERTVDVHIKRLRQRLKKLNATLTIETVRGQGYKVENHV.

Residues 3-116 (QCLVVDDDPR…ELIFRIRAVL (114 aa)) form the Response regulatory domain. Asp52 carries the post-translational modification 4-aspartylphosphate. A DNA-binding region (ompR/PhoB-type) is located at residues 124-222 (NSEMTIGNLT…VRGQGYKVEN (99 aa)).

In terms of processing, phosphorylated by HssS.

The protein localises to the cytoplasm. In terms of biological role, member of the two-component regulatory system HssS/HssR involved in intracellular heme homeostasis and tempering of staphylococcal virulence. Phosphorylated HssR binds to a direct repeat sequence within hrtAB promoter and activates the expression of hrtAB, an efflux pump, in response to extracellular heme, hemin, hemoglobin or blood. This chain is Heme response regulator HssR (hssR), found in Staphylococcus aureus (strain COL).